A 320-amino-acid polypeptide reads, in one-letter code: Atrochrysone carboxyl ACP thioesterase (320 aa).

4 residues coordinate Zn(2+): His-103, His-105, Asp-107, and His-108. Asp-107 (proton donor/acceptor) is an active-site residue.

This sequence belongs to the metallo-beta-lactamase superfamily. It depends on Zn(2+) as a cofactor.

The catalysed reaction is atrochrysone carboxyl-[ACP] + H2O = atrochrysone carboxylate + holo-[ACP] + H(+). Its pathway is secondary metabolite biosynthesis. Its function is as follows. Atrochrysone carboxyl ACP thioesterase; part of the gene cluster that mediates the biosynthesis of geodin, an intermediate in the biosynthesis of other natural products. The pathway begins with the synthesis of atrochrysone thioester by the polyketide synthase (PKS) gedC. The atrochrysone carboxyl ACP thioesterase gedB then breaks the thioester bond and releases the atrochrysone carboxylic acid from gedC. The atrochrysone carboxylic acid is then converted to atrochrysone which is further transformed into emodinanthrone. The next step is performed by the emodinanthrone oxygenase gedH that catalyzes the oxidation of emodinanthrone to emodin. Emodin O-methyltransferase encoded probably by gedA then catalyzes methylation of the 8-hydroxy group of emodin to form questin. Ring cleavage of questin by questin oxidase gedK leads to desmethylsulochrin via several intermediates including questin epoxide. Another methylation step probably catalyzed by methyltransferase gedG leads to the formation of sulochrin which is further converted to dihydrogeodin by the sulochrin halogenase gedL. Finally, the dihydrogeodin oxidase gedJ catalyzes the stereospecific phenol oxidative coupling reaction converting dihydrogeodin to geodin. The protein is Atrochrysone carboxyl ACP thioesterase of Aspergillus terreus (strain NIH 2624 / FGSC A1156).